A 519-amino-acid chain; its full sequence is MISVESKLNLDFNLVEKARAKAKAIAIDTQEFIEKHTTVTVERAVCRLLGIDGVDTDEVPLPNIVVDHIKENNGLNLGAAMYIANAVLNTGKTPQEIAQAISAGELDLTKLPMKDLFEVKTKALSMAKETVEKIKNNRSIRESRFEEYGDKSGPLLYVIVATGNIYEDITQAVAAAKQGADVIAVIRTTGQSLLDYVPYGATTEGFGGTYATQENFRLMREALDKVGAEVGKYIRLCNYCSGLCMPEIAAMGAIERLDVMLNDALYGILFRDINMQRTMIDQNFSRIINGFAGVIINTGEDNYLTTADAFEEAHTVLASQFINEQFALLAGLPEEQMGLGHAFEMDPELKNGFLYELSQAQMAREIFPKAPLKYMPPTKFMTGNIFKGHIQDALFNMVTIMTNQRIHLLGMLTEALHTPFMSDRALSIENAQYIFNNMESISEEIQFKEDGLIQKRAGFVLEKANELLEEIEQLGLFDTLEKGIFGGVKRPKDGGKGLNGVVSKDENYYNPFVELMLNK.

Residue 57–59 (DEV) participates in adenosylcob(III)alamin binding. Pyridoxal 5'-phosphate contacts are provided by residues 187–192 (RTTGQS), S241, Y266, R271, and N302.

Belongs to the KamD family. Heterotetramer of 2 alpha and 2 beta subunits. The cofactor is adenosylcob(III)alamin. Pyridoxal 5'-phosphate is required as a cofactor.

It catalyses the reaction (3S)-3,6-diaminohexanoate = (3S,5S)-3,5-diaminohexanoate. The catalysed reaction is D-lysine = (2R,5S)-2,5-diaminohexanoate. The protein operates within amino-acid metabolism; lysine degradation. With respect to regulation, rapidly inactivated in the presence of D-lysine and to a lesser extent in the absence of adenosylcobalamin (Adocbl). Activity is stable in the presence of Adocbl when D-lysine is absent. Adocbl imparts thermal stability at 37 degrees Celsius. Catalyzes the migration of the L-beta-lysine and D-lysine epsilon amino group to the delta carbon to produce 3,5-diaminohexanoate and 2,5-diaminohexanoate, respectively. The protein is Lysine 5,6-aminomutase alpha subunit (kamD) of Acetoanaerobium sticklandii (strain ATCC 12662 / DSM 519 / JCM 1433 / CCUG 9281 / NCIMB 10654 / HF) (Clostridium sticklandii).